The following is a 255-amino-acid chain: Very-long-chain (3R)-3-hydroxyacyl-CoA dehydratase 2 (255 aa).

Over 3–42 (AAAAATAAAKGNGGGGGRAGAGDASGTRKKKGPGPLATAY) the chain is Cytoplasmic. The tract at residues 11–34 (AKGNGGGGGRAGAGDASGTRKKKG) is disordered. A compositionally biased stretch (gly residues) spans 13-22 (GNGGGGGRAG). The chain crosses the membrane as a helical span at residues 43–61 (LVIYNVVMTAGWLVIAVGL). Over 62-80 (VRAYLAKGSYHSLYYSIEK) the chain is Lumenal. Residues 81–98 (PLKFFQTGALLEILHCAI) traverse the membrane as a helical segment. Residues 99-108 (GIVPSSVVLT) lie on the Cytoplasmic side of the membrane. Residues 109-126 (SFQVMSRVFLIWAVTHSV) traverse the membrane as a helical segment. Residues 127 to 131 (KEVQS) lie on the Lumenal side of the membrane. A helical membrane pass occupies residues 132–147 (EDSVLLFVIAWTITEI). The Cytoplasmic portion of the chain corresponds to 148 to 170 (IRYSFYTFSLLNHLPYLIKWARY). Residues 171–188 (TLFIVLYPMGVSGELLTI) form a helical membrane-spanning segment. Active-site residues include Tyr-177 and Glu-184. Over 189–218 (YAALPFVRQAGLYSISLPNKYNFSFDYYAF) the chain is Lumenal. Residues 199 to 215 (GLYSISLPNKYNFSFDY) are may be involved in interaction with TECR. Asn-210 carries an N-linked (GlcNAc...) asparagine glycan. Residues 219–236 (LILIMISYIPIFPQLYFH) traverse the membrane as a helical segment. Topologically, residues 237–255 (MIHQRRKILSHTEEHKKFE) are cytoplasmic.

Belongs to the very long-chain fatty acids dehydratase HACD family. As to quaternary structure, may interact with enzymes of the ELO family (including ELOVL1); with those enzymes that mediate condensation, the first of the four steps of the reaction cycle responsible for fatty acids elongation, may be part of a larger fatty acids elongase complex. Interacts with BCAP31. Interacts (via the third lumenal loop) with TECR.

The protein resides in the endoplasmic reticulum membrane. The enzyme catalyses a very-long-chain (3R)-3-hydroxyacyl-CoA = a very-long-chain (2E)-enoyl-CoA + H2O. It catalyses the reaction (3R)-hydroxyhexadecanoyl-CoA = (2E)-hexadecenoyl-CoA + H2O. It carries out the reaction (3R)-hydroxyoctadecanoyl-CoA = (2E)-octadecenoyl-CoA + H2O. The catalysed reaction is (3R)-hydroxyeicosanoyl-CoA = (2E)-eicosenoyl-CoA + H2O. The enzyme catalyses (3R)-hydroxydocosanoyl-CoA = (2E)-docosenoyl-CoA + H2O. It catalyses the reaction (3R)-hydroxytetracosanoyl-CoA = (2E)-tetracosenoyl-CoA + H2O. It carries out the reaction (3R)-hydroxyhexacosanoyl-CoA = (2E)-hexacosenoyl-CoA + H2O. Its pathway is lipid metabolism; fatty acid biosynthesis. In terms of biological role, catalyzes the third of the very long-chain fatty acids (VLCFA) elongation four-step cycle (condensation, reduction, dehydration, and reduction). This endoplasmic reticulum-elongation process is characterized by the addition of two carbons to the lipid chain through each cycle. This enzyme catalyzes the dehydration of the 3-hydroxyacyl-CoA intermediate into trans-2,3-enoyl-CoA, within each cycle of elongation. Therefore, it participates in the production of various VLCFAs involved in multiple biological processes as precursors of membrane lipids and lipid mediators. This chain is Very-long-chain (3R)-3-hydroxyacyl-CoA dehydratase 2, found in Pongo abelii (Sumatran orangutan).